The primary structure comprises 348 residues: MMIQTAVAQAKTAPAGPGPWSIKDLVDLQYLDELMSIDNLDVWFCSLVGSIAIGLSGIFPLLVIPIEAGTALKTEAGCQKLKKLLSFAIGGLLGDVFLHLLPEAWAYTSSPGGSHRHYCTQGLWVIGGLMSFLTLEKMFPDEVGDPETKTSFQRTTSSSSDLSSQFSVSPQTNGICSNNNSDSKPKTDISPYTQPEKIKTSGYLNLLANCIDNFTHGLAVAGSFLVSRKVGFLTTFAILLHEIPHEVGDFAILLRAGFDRWKAARMQLSTALGGVLGACFALCSQSQHGAENATTWILPFTSGGFLYIALVNVVPDLLEETNPRNSLLQVLLLFSGIGVMALLSIAMD.

The Cytoplasmic portion of the chain corresponds to 1 to 45; that stretch reads MMIQTAVAQAKTAPAGPGPWSIKDLVDLQYLDELMSIDNLDVWFC. The helical transmembrane segment at 46-66 threads the bilayer; it reads SLVGSIAIGLSGIFPLLVIPI. The Lumenal segment spans residues 67 to 83; that stretch reads EAGTALKTEAGCQKLKK. A helical membrane pass occupies residues 84 to 104; it reads LLSFAIGGLLGDVFLHLLPEA. Residues 105–118 lie on the Cytoplasmic side of the membrane; it reads WAYTSSPGGSHRHY. Residues 119–139 traverse the membrane as a helical segment; the sequence is CTQGLWVIGGLMSFLTLEKMF. Residues 140–219 are Lumenal-facing; it reads PDEVGDPETK…CIDNFTHGLA (80 aa). Residues 144–192 form a disordered region; it reads GDPETKTSFQRTTSSSSDLSSQFSVSPQTNGICSNNNSDSKPKTDISPY. A compositionally biased stretch (low complexity) spans 149–169; the sequence is KTSFQRTTSSSSDLSSQFSVS. Residues 170–182 show a composition bias toward polar residues; the sequence is PQTNGICSNNNSD. The helical transmembrane segment at 220–240 threads the bilayer; the sequence is VAGSFLVSRKVGFLTTFAILL. The short motif at 241-246 is the XEXPHE-motif element; that stretch reads HEIPHE. Topologically, residues 241-262 are cytoplasmic; sequence HEIPHEVGDFAILLRAGFDRWK. A helical transmembrane segment spans residues 263 to 283; the sequence is AARMQLSTALGGVLGACFALC. Residues 284 to 294 lie on the Lumenal side of the membrane; it reads SQSQHGAENAT. A helical membrane pass occupies residues 295–315; sequence TWILPFTSGGFLYIALVNVVP. At 316 to 326 the chain is on the cytoplasmic side; that stretch reads DLLEETNPRNS. The chain crosses the membrane as a helical span at residues 327–347; it reads LLQVLLLFSGIGVMALLSIAM. Residue aspartate 348 is a topological domain, lumenal.

This sequence belongs to the ZIP transporter (TC 2.A.5) family. Homodimer.

Its subcellular location is the golgi apparatus membrane. It localises to the cytoplasmic vesicle membrane. The protein localises to the endoplasmic reticulum membrane. It catalyses the reaction Zn(2+)(in) = Zn(2+)(out). In terms of biological role, functions as a zinc transporter transporting Zn(2+) from the Golgi apparatus to the cytosol and thus influences the zinc level at least in areas of the cytosol. The chain is Zinc transporter ZIP13 from Danio rerio (Zebrafish).